The following is a 164-amino-acid chain: UPF0304 protein ESA_00925 (164 aa).

This sequence belongs to the UPF0304 family.

The chain is UPF0304 protein ESA_00925 from Cronobacter sakazakii (strain ATCC BAA-894) (Enterobacter sakazakii).